The primary structure comprises 451 residues: Interferon regulatory factor 4 (451 aa).

A DNA-binding region (IRF tryptophan pentad repeat) is located at residues 21–129 (NGKLRQWLID…DPYKVYRIVP (109 aa)). Residues S447 and S448 each carry the phosphoserine; by ROCK2 modification.

This sequence belongs to the IRF family. As to quaternary structure, interacts with the BATF-JUNB heterodimer. Interacts with BATF (via bZIP domain); the interaction is direct. Interacts with SPIB. Interacts with DEF6. Directly interacts with NLRP3 in the nucleus of Th2 cells; this interaction enhances IRF4 ability to bind to the IL4 promoter and is required for optimal IRF4-dependent IL4 transcription. Interacts with SPI1. Phosphorylation by ROCK2 regulates IL-17 and IL-21 production. As to expression, lymphoid cells.

The protein resides in the nucleus. Its subcellular location is the cytoplasm. Transcriptional activator. Binds to the interferon-stimulated response element (ISRE) of the MHC class I promoter. Binds the immunoglobulin lambda light chain enhancer, together with PU.1. Probably plays a role in ISRE-targeted signal transduction mechanisms specific to lymphoid cells. Involved in CD8(+) dendritic cell differentiation by forming a complex with the BATF-JUNB heterodimer in immune cells, leading to recognition of AICE sequence (5'-TGAnTCA/GAAA-3'), an immune-specific regulatory element, followed by cooperative binding of BATF and IRF4 and activation of genes. This chain is Interferon regulatory factor 4, found in Homo sapiens (Human).